Reading from the N-terminus, the 338-residue chain is RNA 3'-terminal phosphate cyclase (338 aa).

Residues glutamine 103 and 283–287 (YLADQ) contribute to the ATP site. Histidine 308 functions as the Tele-AMP-histidine intermediate in the catalytic mechanism.

It belongs to the RNA 3'-terminal cyclase family. Type 1 subfamily.

It localises to the cytoplasm. It catalyses the reaction a 3'-end 3'-phospho-ribonucleotide-RNA + ATP = a 3'-end 2',3'-cyclophospho-ribonucleotide-RNA + AMP + diphosphate. Catalyzes the conversion of 3'-phosphate to a 2',3'-cyclic phosphodiester at the end of RNA. The mechanism of action of the enzyme occurs in 3 steps: (A) adenylation of the enzyme by ATP; (B) transfer of adenylate to an RNA-N3'P to produce RNA-N3'PP5'A; (C) and attack of the adjacent 2'-hydroxyl on the 3'-phosphorus in the diester linkage to produce the cyclic end product. The biological role of this enzyme is unknown but it is likely to function in some aspects of cellular RNA processing. The sequence is that of RNA 3'-terminal phosphate cyclase from Escherichia coli (strain K12 / MC4100 / BW2952).